The chain runs to 476 residues: Probable rhodanese domain-containing dual specificity protein phosphatase (476 aa).

Residues 32 to 190 enclose the Rhodanese domain; it reads IGSSKIIIDL…FQKDYSFMCN (159 aa). One can recognise a Tyrosine-protein phosphatase domain in the interval 208–350; it reads YPSEIIKDFL…LKDYQQHLTL (143 aa). C294 (phosphocysteine intermediate) is an active-site residue. A compositionally biased stretch (low complexity) spans 425–436; that stretch reads KTTTSSTTINNK. The interval 425–476 is disordered; the sequence is KTTTSSTTINNKGQQQDKAQEEKDSIFSYADKQEKMTHPTLHSPIELPQSSL. Residues 442–461 show a composition bias toward basic and acidic residues; the sequence is KAQEEKDSIFSYADKQEKMT.

Belongs to the protein-tyrosine phosphatase family. Non-receptor class dual specificity subfamily.

It carries out the reaction O-phospho-L-tyrosyl-[protein] + H2O = L-tyrosyl-[protein] + phosphate. The enzyme catalyses O-phospho-L-seryl-[protein] + H2O = L-seryl-[protein] + phosphate. It catalyses the reaction O-phospho-L-threonyl-[protein] + H2O = L-threonyl-[protein] + phosphate. In terms of biological role, has a dual specificity toward Ser/Thr and Tyr-containing proteins. The sequence is that of Probable rhodanese domain-containing dual specificity protein phosphatase from Dictyostelium discoideum (Social amoeba).